Here is a 335-residue protein sequence, read N- to C-terminus: Vitamin B12 import system permease protein BtuC (335 aa).

The next 9 membrane-spanning stretches (helical) occupy residues 22 to 42, 67 to 87, 94 to 114, 117 to 137, 153 to 173, 200 to 220, 243 to 263, 281 to 301, and 308 to 328; these read LLLLTLGVAVAFVFSLSAGDV, LAVMLVGASLAVAGAVMQSLF, PGLLGVANGAGVALVLTVLLG, LLPVAFMSLSAIAGALVMTFL, LLVGVALGIVCSAVMTWAVYF, LVLALLPVLLWLCCQGKALNF, VLAIGWLVGVSVALAGVIGFV, YLLPGCALAGAGVLLAADVVA, and AELPIGVVTATLGAPLFIWLL.

The protein belongs to the binding-protein-dependent transport system permease family. FecCD subfamily. As to quaternary structure, the complex is composed of two ATP-binding proteins (BtuD), two transmembrane proteins (BtuC) and a solute-binding protein (BtuF).

Its subcellular location is the cell inner membrane. Its function is as follows. Part of the ABC transporter complex BtuCDF involved in vitamin B12 import. Involved in the translocation of the substrate across the membrane. This Serratia proteamaculans (strain 568) protein is Vitamin B12 import system permease protein BtuC.